Here is a 463-residue protein sequence, read N- to C-terminus: Chromosomal replication initiator protein DnaA (463 aa).

The domain I, interacts with DnaA modulators stretch occupies residues 1–84; the sequence is MNTNQIILTN…QLFQHYNNAI (84 aa). The domain II stretch occupies residues 84-124; it reads IKTVEIITKELPASNQATLELPTKTFADIGSSELNSENIFS. The segment at 125 to 343 is domain III, AAA+ region; the sequence is TFDIRFTFDN…GALNKVIAHS (219 aa). Glycine 171, glycine 173, lysine 174, and threonine 175 together coordinate ATP. The interval 344–463 is domain IV, binds dsDNA; sequence NFTAKEITLE…INLMMKILQN (120 aa).

The protein belongs to the DnaA family. As to quaternary structure, oligomerizes as a right-handed, spiral filament on DNA at oriC.

Its subcellular location is the cytoplasm. Functionally, plays an essential role in the initiation and regulation of chromosomal replication. ATP-DnaA binds to the origin of replication (oriC) to initiate formation of the DNA replication initiation complex once per cell cycle. Binds the DnaA box (a 9 base pair repeat at the origin) and separates the double-stranded (ds)DNA. Forms a right-handed helical filament on oriC DNA; dsDNA binds to the exterior of the filament while single-stranded (ss)DNA is stabiized in the filament's interior. The ATP-DnaA-oriC complex binds and stabilizes one strand of the AT-rich DNA unwinding element (DUE), permitting loading of DNA polymerase. After initiation quickly degrades to an ADP-DnaA complex that is not apt for DNA replication. Binds acidic phospholipids. In Rickettsia bellii (strain OSU 85-389), this protein is Chromosomal replication initiator protein DnaA.